The chain runs to 379 residues: Queuine tRNA-ribosyltransferase (379 aa).

The active-site Proton acceptor is aspartate 91. Substrate-binding positions include 91–95, aspartate 145, glutamine 189, and glycine 216; that span reads DSGGF. The tract at residues 247-253 is RNA binding; that stretch reads GVGKPED. Aspartate 266 (nucleophile) is an active-site residue. The interval 271 to 275 is RNA binding; important for wobble base 34 recognition; that stretch reads TRNAR. Positions 304, 306, 309, and 335 each coordinate Zn(2+).

It belongs to the queuine tRNA-ribosyltransferase family. As to quaternary structure, homodimer. Within each dimer, one monomer is responsible for RNA recognition and catalysis, while the other monomer binds to the replacement base PreQ1. It depends on Zn(2+) as a cofactor.

The catalysed reaction is 7-aminomethyl-7-carbaguanine + guanosine(34) in tRNA = 7-aminomethyl-7-carbaguanosine(34) in tRNA + guanine. Its pathway is tRNA modification; tRNA-queuosine biosynthesis. In terms of biological role, catalyzes the base-exchange of a guanine (G) residue with the queuine precursor 7-aminomethyl-7-deazaguanine (PreQ1) at position 34 (anticodon wobble position) in tRNAs with GU(N) anticodons (tRNA-Asp, -Asn, -His and -Tyr). Catalysis occurs through a double-displacement mechanism. The nucleophile active site attacks the C1' of nucleotide 34 to detach the guanine base from the RNA, forming a covalent enzyme-RNA intermediate. The proton acceptor active site deprotonates the incoming PreQ1, allowing a nucleophilic attack on the C1' of the ribose to form the product. After dissociation, two additional enzymatic reactions on the tRNA convert PreQ1 to queuine (Q), resulting in the hypermodified nucleoside queuosine (7-(((4,5-cis-dihydroxy-2-cyclopenten-1-yl)amino)methyl)-7-deazaguanosine). In Vibrio cholerae serotype O1 (strain ATCC 39315 / El Tor Inaba N16961), this protein is Queuine tRNA-ribosyltransferase.